A 76-amino-acid polypeptide reads, in one-letter code: Acyl carrier protein (76 aa).

In terms of domain architecture, Carrier spans 1–75; the sequence is MIFEKIKDLI…DIVFYITKNT (75 aa). Serine 35 bears the O-(pantetheine 4'-phosphoryl)serine mark.

This sequence belongs to the acyl carrier protein (ACP) family. In terms of processing, 4'-phosphopantetheine is transferred from CoA to a specific serine of apo-ACP by AcpS. This modification is essential for activity because fatty acids are bound in thioester linkage to the sulfhydryl of the prosthetic group.

The protein localises to the cytoplasm. It functions in the pathway lipid metabolism; fatty acid biosynthesis. In terms of biological role, carrier of the growing fatty acid chain in fatty acid biosynthesis. The polypeptide is Acyl carrier protein (Aster yellows witches'-broom phytoplasma (strain AYWB)).